Consider the following 289-residue polypeptide: G1/S-specific cyclin-D2 (289 aa).

The region spanning L26–A151 is the Cyclin N-terminal domain. The disordered stretch occupies residues Q264 to L289. At S271 the chain carries Phosphoserine. A Phosphothreonine modification is found at T280.

Belongs to the cyclin family. Cyclin D subfamily. As to quaternary structure, interacts with either CDK4 or CDK6 protein kinase to form a serine/threonine kinase holoenzyme complex. The cyclin subunit imparts substrate specificity to the complex. Phosphorylation at Thr-280 by MAP kinases is required for ubiquitination and degradation by the DCX(AMBRA1) complex. Post-translationally, ubiquitinated by the DCX(AMBRA1) complex during the transition from G1 to S cell phase, leading to its degradation: ubiquitination is dependent on Thr-280 phosphorylation. The DCX(AMBRA1) complex represents the major regulator of CCND2 stability during the G1/S transition. Polyubiquitinated by the SCF(FBXL2) complex, leading to proteasomal degradation.

It is found in the nucleus. Its subcellular location is the cytoplasm. The protein localises to the nucleus membrane. Its function is as follows. Regulatory component of the cyclin D2-CDK4 (DC) complex that phosphorylates and inhibits members of the retinoblastoma (RB) protein family including RB1 and regulates the cell-cycle during G(1)/S transition. Phosphorylation of RB1 allows dissociation of the transcription factor E2F from the RB/E2F complex and the subsequent transcription of E2F target genes which are responsible for the progression through the G(1) phase. Hypophosphorylates RB1 in early G(1) phase. Cyclin D-CDK4 complexes are major integrators of various mitogenenic and antimitogenic signals. The sequence is that of G1/S-specific cyclin-D2 from Mus musculus (Mouse).